The chain runs to 185 residues: Small ribosomal subunit protein uS5c (185 aa).

One can recognise an S5 DRBM domain in the interval 26 to 89; that stretch reads FVERLIKISR…ADGRKNLIKI (64 aa).

This sequence belongs to the universal ribosomal protein uS5 family. In terms of assembly, part of the 30S ribosomal subunit. Contacts protein S4.

Its subcellular location is the plastid. It is found in the chloroplast. Its function is as follows. With S4 and S12 plays an important role in translational accuracy. This Trieres chinensis (Marine centric diatom) protein is Small ribosomal subunit protein uS5c (rps5).